A 194-amino-acid chain; its full sequence is Endoribonuclease YbeY (194 aa).

The Zn(2+) site is built by H127, H131, and D137. The disordered stretch occupies residues 162-194 (PLSNDEDSAPEQDDSFDDDASDSSGGIMSGGVS). Over residues 165 to 182 (NDEDSAPEQDDSFDDDAS) the composition is skewed to acidic residues.

This sequence belongs to the endoribonuclease YbeY family. It depends on Zn(2+) as a cofactor.

Its subcellular location is the cytoplasm. Single strand-specific metallo-endoribonuclease involved in late-stage 70S ribosome quality control and in maturation of the 3' terminus of the 16S rRNA. In Rhodopirellula baltica (strain DSM 10527 / NCIMB 13988 / SH1), this protein is Endoribonuclease YbeY.